A 190-amino-acid polypeptide reads, in one-letter code: NADH-quinone oxidoreductase subunit B (190 aa).

Residues Cys-69, Cys-70, Cys-134, and Cys-164 each contribute to the [4Fe-4S] cluster site.

Belongs to the complex I 20 kDa subunit family. In terms of assembly, NDH-1 is composed of 14 different subunits. Subunits NuoB, C, D, E, F, and G constitute the peripheral sector of the complex. Requires [4Fe-4S] cluster as cofactor.

Its subcellular location is the cell inner membrane. It carries out the reaction a quinone + NADH + 5 H(+)(in) = a quinol + NAD(+) + 4 H(+)(out). Functionally, NDH-1 shuttles electrons from NADH, via FMN and iron-sulfur (Fe-S) centers, to quinones in the respiratory chain. Couples the redox reaction to proton translocation (for every two electrons transferred, four hydrogen ions are translocated across the cytoplasmic membrane), and thus conserves the redox energy in a proton gradient. In Chelativorans sp. (strain BNC1), this protein is NADH-quinone oxidoreductase subunit B.